The following is a 30-amino-acid chain: V-type proton ATPase catalytic subunit A isoform 1 (30 aa).

Belongs to the ATPase alpha/beta chains family. As to quaternary structure, V-ATPase is a heteromultimeric enzyme composed of a peripheral catalytic V1 complex (main components: subunits A, B, C, D, E, and F) attached to an integral membrane V0 proton pore complex (main component: the proteolipid protein).

It catalyses the reaction ATP + H2O + 4 H(+)(in) = ADP + phosphate + 5 H(+)(out). Its function is as follows. Catalytic subunit of the peripheral V1 complex of vacuolar ATPase. V-ATPase vacuolar ATPase is responsible for acidifying a variety of intracellular compartments in eukaryotic cells. The chain is V-type proton ATPase catalytic subunit A isoform 1 from Psilotum nudum (Whisk fern).